The chain runs to 973 residues: Translation initiation factor IF-2 (973 aa).

Over residues 97 to 135 the composition is skewed to basic and acidic residues; sequence GHIDLDGGQHKKQQEEPKAKEEPKVKEEPKVKEEPKVKE. Disordered regions lie at residues 97 to 343 and 353 to 372; these read GHID…EDVQ and LTNK…DKRD. Over residues 136 to 155 the composition is skewed to low complexity; it reads APAAPAAQAPVKPAQPAQAP. Basic and acidic residues-rich tracts occupy residues 156 to 175, 183 to 204, 212 to 224, and 237 to 250; these read TEKK…KTVE, PKVE…DDNL, LESK…KIDL, and TKEE…EKQK. Residues 252 to 266 show a composition bias toward low complexity; the sequence is NNNRPGNNSNGPGAP. Basic and acidic residues-rich tracts occupy residues 315-326 and 333-343; these read PNRDDRPNNDRK and VKAEVSEEDVQ. The tr-type G domain maps to 472-642; the sequence is ARPPIVTVMG…LLEADLLDLK (171 aa). The segment at 481-488 is G1; the sequence is GHVDHGKT. 481–488 contributes to the GTP binding site; the sequence is GHVDHGKT. Residues 506–510 form a G2 region; that stretch reads GITQH. The tract at residues 528 to 531 is G3; sequence DTPG. GTP contacts are provided by residues 528 to 532 and 582 to 585; these read DTPGH and NKID. Positions 582-585 are G4; that stretch reads NKID. The interval 618 to 620 is G5; that stretch reads SAK.

It belongs to the TRAFAC class translation factor GTPase superfamily. Classic translation factor GTPase family. IF-2 subfamily.

It localises to the cytoplasm. Functionally, one of the essential components for the initiation of protein synthesis. Protects formylmethionyl-tRNA from spontaneous hydrolysis and promotes its binding to the 30S ribosomal subunits. Also involved in the hydrolysis of GTP during the formation of the 70S ribosomal complex. The polypeptide is Translation initiation factor IF-2 (Parabacteroides distasonis (strain ATCC 8503 / DSM 20701 / CIP 104284 / JCM 5825 / NCTC 11152)).